The following is a 1235-amino-acid chain: Gem-associated protein 5 (1235 aa).

The stretch at 55 to 102 (STRINILALDVSPMWGLGNGGPTKPFAIVGDDLSVQVWDCALGEAVIG) is one WD 1 repeat. The tract at residues 227–263 (NNLALSAEEWRSRNGGQEEKPKTKPPPLTKSKAAESD) is disordered. Basic and acidic residues predominate over residues 234–248 (EEWRSRNGGQEEKPK). 4 positions are modified to phosphoserine: S289, S290, S351, and S354. The tract at residues 340–368 (DCEPTKPTGPLSDASTISNKNDASDSTEG) is disordered. Polar residues predominate over residues 352–368 (DASTISNKNDASDSTEG). T355 bears the Phosphothreonine mark. A Phosphoserine modification is found at S357. A Phosphothreonine modification is found at T411. 7 WD repeats span residues 428–469 (ISAE…HAGK), 475–512 (KTAG…KMLR), 565–605 (TVAF…TSCL), 611–650 (YVSS…VKTH), 690–730 (TIVN…EKSW), 739–779 (LFAR…RNWK), and 788–828 (TEKA…KPPL). The LXXLL motif motif lies at 443-447 (LETLL). The span at 963-980 (KEQNNRSAKECPKCKEQS) shows a compositional bias: basic and acidic residues. Positions 963 to 983 (KEQNNRSAKECPKCKEQSPDS) are disordered.

As to quaternary structure, component of the core survival motor neuron (SMN) complex composed of Smn, Gem2, Gem3, rig/Gem5 and one of 3 almost identical Gem4 paralogs encoded by Glos/Gem4a, Gem4b or Gem4c. Interacts with nuclear receptors EcR, svp (seven up), usp (ultraspiracle), Hr39 and Hr3. In terms of tissue distribution, expressed in the brain and salivary glands of early and late second instar larvae. Expressed in nurse cells and oocytes.

The protein resides in the nucleus. It localises to the cytoplasm. Its subcellular location is the U-body. The protein localises to the gem. Component of the survival motor neuron (SMN) complex that catalyzes the assembly of small nuclear ribonucleoproteins (snRNPs), the building blocks of the spliceosome, and thereby plays an important role in the splicing of cellular pre-mRNAs. Nuclear receptor cofactor for the ecdysone-regulated processes of molting and puparium formation. Acts downstream from ecdysone biosynthesis and release to control the expression of specific ecdysone-regulated genes such as Eip74EF (E74). Essential in muscle and neuronal tissues for motor function, including climbing ability and flight. The protein is Gem-associated protein 5 of Drosophila melanogaster (Fruit fly).